Consider the following 136-residue polypeptide: Piercer of microtubule wall 1 protein (136 aa).

A disordered region spans residues 1–24 (MAEECPRACAEPVAPKATAPPERT).

Belongs to the PIERCE1 family. In terms of assembly, microtubule inner protein component of sperm flagellar doublet microtubules. Interacts with CFAP53, ODAD1 and ODAD3; the interactions link the outer dynein arms docking complex (ODA-DC) to the internal microtubule inner proteins (MIP) in cilium axoneme. As to expression, expressed in airway epithelial cells.

The protein localises to the cytoplasm. It is found in the cytoskeleton. The protein resides in the cilium axoneme. It localises to the flagellum axoneme. Microtubule inner protein involved in the attachment of outer dynein arms (ODAs) to dynein-decorated doublet microtubules (DMTs) in cilia axoneme, which is required for motile cilia beating. Functions at the initial step of left-right asymmetry specification of the visceral organs. The chain is Piercer of microtubule wall 1 protein from Homo sapiens (Human).